We begin with the raw amino-acid sequence, 969 residues long: RNA polymerase-associated protein RapA (969 aa).

Residues 164–334 (EVGRRHAPRV…FARLRLLDAD (171 aa)) enclose the Helicase ATP-binding domain. 177 to 184 (DEVGLGKT) contacts ATP. Residues 280-283 (DEAH) carry the DEAH box motif. The 155-residue stretch at 492-646 (RVNWLLEKVK…TCPTGRAVYD (155 aa)) folds into the Helicase C-terminal domain.

Belongs to the SNF2/RAD54 helicase family. RapA subfamily. As to quaternary structure, interacts with the RNAP. Has a higher affinity for the core RNAP than for the holoenzyme. Its ATPase activity is stimulated by binding to RNAP.

Its function is as follows. Transcription regulator that activates transcription by stimulating RNA polymerase (RNAP) recycling in case of stress conditions such as supercoiled DNA or high salt concentrations. Probably acts by releasing the RNAP, when it is trapped or immobilized on tightly supercoiled DNA. Does not activate transcription on linear DNA. Probably not involved in DNA repair. The sequence is that of RNA polymerase-associated protein RapA from Vibrio cholerae serotype O1 (strain ATCC 39315 / El Tor Inaba N16961).